Consider the following 226-residue polypeptide: Adenylate kinase (226 aa).

Residue 12-17 (GSGKGT) coordinates ATP. Residues 32-61 (ESGAIFREHIGGGTELGLKAKEYIERGDLV) form an NMP region. Residues serine 33, arginine 38, 59 to 61 (DLV), 87 to 90 (GFPR), and glutamine 94 each bind AMP. Residues 128–171 (GRRLCVNDNNHPNHIAFEAIKPVEKDGKLVCRVCGGDLKTRPDD) are LID. Arginine 129 serves as a coordination point for ATP. AMP is bound by residues arginine 168 and arginine 180. Alanine 213 lines the ATP pocket.

Belongs to the adenylate kinase family. In terms of assembly, monomer.

The protein resides in the cytoplasm. It catalyses the reaction AMP + ATP = 2 ADP. It participates in purine metabolism; AMP biosynthesis via salvage pathway; AMP from ADP: step 1/1. Functionally, catalyzes the reversible transfer of the terminal phosphate group between ATP and AMP. Plays an important role in cellular energy homeostasis and in adenine nucleotide metabolism. The chain is Adenylate kinase from Desulfotalea psychrophila (strain LSv54 / DSM 12343).